Consider the following 88-residue polypeptide: Putative membrane protein insertion efficiency factor (88 aa).

The segment at 68–88 (VPPPNSDTRARGEADARSHRL) is disordered. Over residues 75–88 (TRARGEADARSHRL) the composition is skewed to basic and acidic residues.

This sequence belongs to the UPF0161 family.

It localises to the cell inner membrane. Could be involved in insertion of integral membrane proteins into the membrane. This is Putative membrane protein insertion efficiency factor from Burkholderia cenocepacia (strain ATCC BAA-245 / DSM 16553 / LMG 16656 / NCTC 13227 / J2315 / CF5610) (Burkholderia cepacia (strain J2315)).